Here is a 266-residue protein sequence, read N- to C-terminus: Type 1 encapsulin shell protein (266 aa).

This sequence belongs to the encapsulin family. Family 1 subfamily. As to quaternary structure, this encapsulin nanocompartment is formed by 60 subunits; monomers form 12 pentamers which assemble to form shells. Shells are loaded with 4 encapsulated ferritin-like protein decamers (EncFtn) in a tetrahedral arrangement. A 3 nm gap is consistently seen between the shell and the cargo.

The protein resides in the encapsulin nanocompartment. In terms of biological role, shell component of a type 1 encapsulin nanocompartment. Assembles into proteinaceous shells about 21 nm in diameter. Small pores form at, or close to, the 2-, 3-, and 5-fold symmetry axes. Data analysis suggests the 5-fold pores open and close with maximal and minimal aperatures of 15 and 5 Angstroms. Cargo protein Fer (ferritin-like protein, probably stores iron) is targeted to the interior via its C-terminal extension; empty intact shells can be isolated in the absence of cargo protein. The protein is Type 1 encapsulin shell protein of Haliangium ochraceum (strain DSM 14365 / JCM 11303 / SMP-2).